The chain runs to 596 residues: Protein FlbA (596 aa).

4 TPR repeats span residues 91–124 (GLAWHILAIAREKTGDFASSLRAYEAALALLPDH), 159–192 (VEGANNLACALRELNRESEAIEVLKAALGANPEA), 193–226 (AVLWNTLGTVLCNIGDAAGSIVFFDESLRLAPDF), and 228–260 (KAYHNRAFARLDLGEIEAALADCEAAMRSPGSP).

In Caulobacter vibrioides (strain ATCC 19089 / CIP 103742 / CB 15) (Caulobacter crescentus), this protein is Protein FlbA (flbA).